The primary structure comprises 775 residues: MQQEAERCRVRTKRPDMALYVPKARRGTALLKSSDQEEGHGPPAFVPKDQKEGCLPQKISASKPESQRRGAGHSDRKDVDCREGKRSASQLRKDRCPQKQNKEKACSKKGAEESTEASSQEHQHRAPDAGIVSSIPLQRLFKPKDMDCWEVQTAGATGHWRVSPSQSSSEVSAAQVPSRPFQNVELCDFSGETFVNRNLESSIVTEAKVPELVSQFPQVVTTLLKPDGMAMPVTLSSDSETAPSSLETPDGMSKHSPGDISVVSVPGGPDEDVDSTFVDFEVESEGTVNSTESVLGQKGVDSILETVDNVSLKMAVVSKLESTNGTIDPAVTRECESDSSADELCVKSEPSDTAVLVHEIDTDDGFRNVCDSTSKACMVDIAGTACDPVTEGSSCTGAVGESGESSGNMRNFSDYIEMSADVAPLDRAKSENDSENISSLSACSDIYAESIASGFTESTGKLIESVSDGASSLPIKKTADSNIATCLDSELSMSDASDVLLESALGSDLDTTEEMTEALHDLKTAEEFKTKEEDYSESVVCGISFSDSSVETSVDLKTTDTSHIQGSSAVEESWESMFNDDGDCVDPRLLLELSGNVKNRKSIQEPRFDYYSHELPDIDLSECEFPHVIEIYDFPQEFRTEDLLRIFCSYQKKGFDIKWVDDTHALGVFASPITARDALGTKHTMVKIRPLSQATRAAKAKARACAEFLQPAKERPETSAALARRLVISALGVRSKQSKTEREAELRKLQEARERKRLEAKQREDIWEGRDQSVV.

2 stretches are compositionally biased toward basic and acidic residues: residues 1–16 and 65–112; these read MQQE…KRPD and ESQR…KGAE. 2 disordered regions span residues 1 to 127 and 235 to 262; these read MQQE…HRAP and LSSD…DISV. Positions 7–27 are EJC-binding motif; may mediate interaction with the EJC; sequence RCRVRTKRPDMALYVPKARRG. Residues 235–247 are compositionally biased toward polar residues; sequence LSSDSETAPSSLE. Ser-671 carries the post-translational modification Phosphoserine. Position 695 is a phosphothreonine (Thr-695). The stretch at 734 to 766 forms a coiled coil; sequence RSKQSKTEREAELRKLQEARERKRLEAKQREDI. The disordered stretch occupies residues 755-775; sequence RKRLEAKQREDIWEGRDQSVV.

May interact with the exon junction complex (EJC) composed at least of CASC3, EIF4A3, MAGOH and RBM8A.

This is Coiled-coil domain-containing protein R3HCC1L (R3hcc1l) from Mus musculus (Mouse).